The sequence spans 729 residues: Glycerophosphodiester phosphodiesterase GDPDL5 (729 aa).

The N-terminal stretch at 1 to 22 (MACPRVIFLILITFFILQTAFS) is a signal peptide. 2 consecutive GP-PDE domains span residues 33–320 (PAVI…YRAI) and 337–645 (ITII…ARYR). Asn88, Asn162, Asn218, Asn227, Asn285, Asn302, Asn390, Asn401, and Asn507 each carry an N-linked (GlcNAc...) asparagine glycan. The chain crosses the membrane as a helical span at residues 709–729 (AIEVPFAFIAMAILVCFFISV).

This sequence belongs to the glycerophosphoryl diester phosphodiesterase family. As to expression, expressed in stems, flowers and siliques.

Its subcellular location is the membrane. The catalysed reaction is a sn-glycero-3-phosphodiester + H2O = an alcohol + sn-glycerol 3-phosphate + H(+). This is Glycerophosphodiester phosphodiesterase GDPDL5 from Arabidopsis thaliana (Mouse-ear cress).